The following is a 560-amino-acid chain: Exonuclease subunit 2 (560 aa).

Residue 36–43 (GRNGGGKS) coordinates ATP.

It to phage T5 protein D13 and to yeast RAD52. In terms of assembly, consists of two subunits: gp46 and gp47.

Functionally, exonuclease that plays a role in viral genome replication, DNA recombination, and host DNA degradation. This is Exonuclease subunit 2 (46) from Enterobacteria phage T4 (Bacteriophage T4).